Here is an 850-residue protein sequence, read N- to C-terminus: DNA mismatch repair protein MutS (850 aa).

An ATP-binding site is contributed by 608-615; that stretch reads GPNMGGKS.

It belongs to the DNA mismatch repair MutS family.

Functionally, this protein is involved in the repair of mismatches in DNA. It is possible that it carries out the mismatch recognition step. This protein has a weak ATPase activity. This Thiobacillus denitrificans (strain ATCC 25259 / T1) protein is DNA mismatch repair protein MutS.